A 185-amino-acid chain; its full sequence is Potassium-transporting ATPase KdpC subunit 2 (185 aa).

The chain crosses the membrane as a helical span at residues 8 to 28 (LGLVLIMFVLCGFIFPLTVTA).

Belongs to the KdpC family. In terms of assembly, the system is composed of three essential subunits: KdpA, KdpB and KdpC.

It localises to the cell membrane. The protein localises to the membrane raft. Functionally, part of the high-affinity ATP-driven potassium transport (or Kdp) system, which catalyzes the hydrolysis of ATP coupled with the electrogenic transport of potassium into the cytoplasm. This subunit acts as a catalytic chaperone that increases the ATP-binding affinity of the ATP-hydrolyzing subunit KdpB by the formation of a transient KdpB/KdpC/ATP ternary complex. This Staphylococcus aureus (strain Mu50 / ATCC 700699) protein is Potassium-transporting ATPase KdpC subunit 2.